The chain runs to 104 residues: ATP-dependent Clp protease adapter protein ClpS (104 aa).

This sequence belongs to the ClpS family. In terms of assembly, binds to the N-terminal domain of the chaperone ClpA.

Involved in the modulation of the specificity of the ClpAP-mediated ATP-dependent protein degradation. This is ATP-dependent Clp protease adapter protein ClpS from Paraburkholderia xenovorans (strain LB400).